Consider the following 315-residue polypeptide: Glycine--tRNA ligase alpha subunit (315 aa).

Belongs to the class-II aminoacyl-tRNA synthetase family. Tetramer of two alpha and two beta subunits.

Its subcellular location is the cytoplasm. It carries out the reaction tRNA(Gly) + glycine + ATP = glycyl-tRNA(Gly) + AMP + diphosphate. This chain is Glycine--tRNA ligase alpha subunit, found in Pseudomonas putida (strain GB-1).